Reading from the N-terminus, the 143-residue chain is Large ribosomal subunit protein uL11 (143 aa).

Belongs to the universal ribosomal protein uL11 family. In terms of assembly, part of the ribosomal stalk of the 50S ribosomal subunit. Interacts with L10 and the large rRNA to form the base of the stalk. L10 forms an elongated spine to which L12 dimers bind in a sequential fashion forming a multimeric L10(L12)X complex. Post-translationally, one or more lysine residues are methylated.

Forms part of the ribosomal stalk which helps the ribosome interact with GTP-bound translation factors. The sequence is that of Large ribosomal subunit protein uL11 from Pseudomonas syringae pv. tomato (strain ATCC BAA-871 / DC3000).